The following is a 158-amino-acid chain: 6,7-dimethyl-8-ribityllumazine synthase (158 aa).

5-amino-6-(D-ribitylamino)uracil-binding positions include F23, 61 to 63 (SFE), and 85 to 87 (AVI). Residue 90–91 (ET) participates in (2S)-2-hydroxy-3-oxobutyl phosphate binding. The active-site Proton donor is the H93. F118 contributes to the 5-amino-6-(D-ribitylamino)uracil binding site. Position 132 (R132) interacts with (2S)-2-hydroxy-3-oxobutyl phosphate.

The protein belongs to the DMRL synthase family.

The enzyme catalyses (2S)-2-hydroxy-3-oxobutyl phosphate + 5-amino-6-(D-ribitylamino)uracil = 6,7-dimethyl-8-(1-D-ribityl)lumazine + phosphate + 2 H2O + H(+). The protein operates within cofactor biosynthesis; riboflavin biosynthesis; riboflavin from 2-hydroxy-3-oxobutyl phosphate and 5-amino-6-(D-ribitylamino)uracil: step 1/2. Functionally, catalyzes the formation of 6,7-dimethyl-8-ribityllumazine by condensation of 5-amino-6-(D-ribitylamino)uracil with 3,4-dihydroxy-2-butanone 4-phosphate. This is the penultimate step in the biosynthesis of riboflavin. The protein is 6,7-dimethyl-8-ribityllumazine synthase of Prochlorococcus marinus (strain MIT 9515).